The sequence spans 363 residues: 1-aminocyclopropane-1-carboxylate oxidase homolog (363 aa).

The 101-residue stretch at 212 to 312 (FHLFCSCNYY…MSITCFFGES (101 aa)) folds into the Fe2OG dioxygenase domain. Fe cation-binding residues include H236, D238, and H292.

Belongs to the iron/ascorbate-dependent oxidoreductase family.

This is 1-aminocyclopropane-1-carboxylate oxidase homolog (ACO3) from Solanum lycopersicum (Tomato).